Here is a 184-residue protein sequence, read N- to C-terminus: uncharacterized protein (184 aa).

The region spanning 72-135 (RKSQAILLIG…GIALGSAVKV (64 aa)) is the 4Fe-4S domain. Positions 92, 95, 100, and 118 each coordinate [4Fe-4S] cluster.

[4Fe-4S] cluster is required as a cofactor.

This is an uncharacterized protein from Archaeoglobus fulgidus (strain ATCC 49558 / DSM 4304 / JCM 9628 / NBRC 100126 / VC-16).